Consider the following 481-residue polypeptide: ATP synthase subunit beta (481 aa).

167-174 contacts ATP; sequence GGAGVGKT.

This sequence belongs to the ATPase alpha/beta chains family. In terms of assembly, F-type ATPases have 2 components, CF(1) - the catalytic core - and CF(0) - the membrane proton channel. CF(1) has five subunits: alpha(3), beta(3), gamma(1), delta(1), epsilon(1). CF(0) has three main subunits: a(1), b(2) and c(9-12). The alpha and beta chains form an alternating ring which encloses part of the gamma chain. CF(1) is attached to CF(0) by a central stalk formed by the gamma and epsilon chains, while a peripheral stalk is formed by the delta and b chains.

It is found in the cell membrane. It catalyses the reaction ATP + H2O + 4 H(+)(in) = ADP + phosphate + 5 H(+)(out). In terms of biological role, produces ATP from ADP in the presence of a proton gradient across the membrane. The catalytic sites are hosted primarily by the beta subunits. The chain is ATP synthase subunit beta from Corynebacterium diphtheriae (strain ATCC 700971 / NCTC 13129 / Biotype gravis).